A 256-amino-acid chain; its full sequence is DNA repair protein RecO (256 aa).

The protein belongs to the RecO family.

Its function is as follows. Involved in DNA repair and RecF pathway recombination. This chain is DNA repair protein RecO, found in Desulforamulus reducens (strain ATCC BAA-1160 / DSM 100696 / MI-1) (Desulfotomaculum reducens).